The primary structure comprises 376 residues: Chaperone protein DnaJ (376 aa).

The J domain maps to 5 to 69 (DYYEILGVDR…EKRARYDRFG (65 aa)). The CR-type zinc-finger motif lies at 135 to 217 (GLETDIRVPH…CNGKGVVRKT (83 aa)). The Zn(2+) site is built by Cys148, Cys151, Cys165, Cys168, Cys191, Cys194, Cys205, and Cys208. CXXCXGXG motif repeat units follow at residues 148–155 (CPVCHGSR), 165–172 (CQTCGGSG), 191–198 (CPDCQGEG), and 205–212 (CSNCNGKG).

Belongs to the DnaJ family. In terms of assembly, homodimer. Zn(2+) serves as cofactor.

It localises to the cytoplasm. In terms of biological role, participates actively in the response to hyperosmotic and heat shock by preventing the aggregation of stress-denatured proteins and by disaggregating proteins, also in an autonomous, DnaK-independent fashion. Unfolded proteins bind initially to DnaJ; upon interaction with the DnaJ-bound protein, DnaK hydrolyzes its bound ATP, resulting in the formation of a stable complex. GrpE releases ADP from DnaK; ATP binding to DnaK triggers the release of the substrate protein, thus completing the reaction cycle. Several rounds of ATP-dependent interactions between DnaJ, DnaK and GrpE are required for fully efficient folding. Also involved, together with DnaK and GrpE, in the DNA replication of plasmids through activation of initiation proteins. The protein is Chaperone protein DnaJ of Methanothermobacter thermautotrophicus (strain ATCC 29096 / DSM 1053 / JCM 10044 / NBRC 100330 / Delta H) (Methanobacterium thermoautotrophicum).